The following is an 88-amino-acid chain: N(2)-fixation sustaining protein CowN (88 aa).

Belongs to the CowN family.

Its function is as follows. Is required to sustain N(2)-dependent growth in the presence of low levels of carbon monoxide (CO). Probably acts by protecting the N(2) fixation ability of the nitrogenase complex, which is inactivated in the presence of CO. In Rhodomicrobium vannielii (strain ATCC 17100 / DSM 162 / LMG 4299 / NCIMB 10020 / ATH 3.1.1), this protein is N(2)-fixation sustaining protein CowN.